The chain runs to 91 residues: Elongation factor 1-beta (91 aa).

The protein belongs to the EF-1-beta/EF-1-delta family.

Functionally, promotes the exchange of GDP for GTP in EF-1-alpha/GDP, thus allowing the regeneration of EF-1-alpha/GTP that could then be used to form the ternary complex EF-1-alpha/GTP/AAtRNA. In Thermococcus onnurineus (strain NA1), this protein is Elongation factor 1-beta.